The following is a 220-amino-acid chain: Protein GrpE (220 aa).

The interval 1–55 is disordered; sequence MCGGDVQGQGVASGCDEALERADSLRASDPVPVESGEGSVPGEHSQELETGASEE.

Belongs to the GrpE family. In terms of assembly, homodimer.

It localises to the cytoplasm. Functionally, participates actively in the response to hyperosmotic and heat shock by preventing the aggregation of stress-denatured proteins, in association with DnaK and GrpE. It is the nucleotide exchange factor for DnaK and may function as a thermosensor. Unfolded proteins bind initially to DnaJ; upon interaction with the DnaJ-bound protein, DnaK hydrolyzes its bound ATP, resulting in the formation of a stable complex. GrpE releases ADP from DnaK; ATP binding to DnaK triggers the release of the substrate protein, thus completing the reaction cycle. Several rounds of ATP-dependent interactions between DnaJ, DnaK and GrpE are required for fully efficient folding. This is Protein GrpE from Treponema pallidum (strain Nichols).